Consider the following 650-residue polypeptide: Pentatricopeptide repeat-containing protein At1g51965, mitochondrial (650 aa).

Residues 1–23 (MKLLRRRFFNSVNTITRPNRRHY) constitute a mitochondrion transit peptide. 14 PPR repeats span residues 132-169 (DPFL…NVHG), 170-200 (NIST…WDLK), 202-236 (NSFT…GHKL), 237-267 (DIFA…RHCR), 269-303 (DEYT…GLTL), 304-338 (NVVG…GCRP), 339-369 (NEYT…SKRY), 371-405 (TQGI…PVKG), 406-440 (ERDS…GVVT), 441-475 (DTMM…GPSP), 476-510 (DIFT…DCKP), 511-545 (DIIS…GLNP), 546-580 (DVVT…GCQP), and 581-615 (NIVT…GLTP).

The protein belongs to the PPR family. P subfamily.

The protein resides in the mitochondrion. The chain is Pentatricopeptide repeat-containing protein At1g51965, mitochondrial from Arabidopsis thaliana (Mouse-ear cress).